We begin with the raw amino-acid sequence, 312 residues long: E3 ubiquitin-protein ligase RNF126-B (312 aa).

Zn(2+) is bound by residues C13, C16, C29, and C32. The C4-type zinc finger occupies 13–32; it reads CHSCTAEITPRLPEYTCPRC. 2 disordered regions span residues 41-63 and 96-139; these read PETSRNSESNSSNNSGTDQNRPS and GTSG…RNEG. Over residues 44-55 the composition is skewed to low complexity; sequence SRNSESNSSNNS. A compositionally biased stretch (basic and acidic residues) spans 102-115; sequence EETRDGESRREHQS. Residues 124 to 134 show a composition bias toward basic residues; the sequence is PRARMSTRRGA. The RING-type zinc-finger motif lies at 228 to 269; sequence CPVCKEDYTVGESVRQLPCNHLFHNDCIIPWLEQHDTCPVCR. The disordered stretch occupies residues 275-312; sequence QNTATNPPGLTDMTFSSSSTSSSSSTSPTDENNTANNS. A compositionally biased stretch (low complexity) spans 290-301; sequence SSSSTSSSSSTS. Over residues 302-312 the composition is skewed to polar residues; it reads PTDENNTANNS.

It is found in the cytoplasm. The protein localises to the nucleus. The enzyme catalyses S-ubiquitinyl-[E2 ubiquitin-conjugating enzyme]-L-cysteine + [acceptor protein]-L-lysine = [E2 ubiquitin-conjugating enzyme]-L-cysteine + N(6)-ubiquitinyl-[acceptor protein]-L-lysine.. Its pathway is protein modification; protein ubiquitination. Its function is as follows. E3 ubiquitin-protein ligase that mediates ubiquitination oF target proteins. Depending on the associated E2 ligase, mediates 'Lys-27'-, 'Lys-29'-, 'Lys-48'- and/or 'Lys-63'-linked polyubiquitination of substrates. Part of a BAG6-dependent quality control process ensuring that proteins of the secretory pathway that are mislocalized to the cytosol are degraded by the proteasome. Probably acts by providing the ubiquitin ligase activity associated with the BAG6 complex and be responsible for ubiquitination of the hydrophobic mislocalized proteins and their targeting to the proteasome. The protein is E3 ubiquitin-protein ligase RNF126-B of Xenopus laevis (African clawed frog).